Here is a 117-residue protein sequence, read N- to C-terminus: UPF0102 protein FTF0898c (117 aa).

Belongs to the UPF0102 family.

The sequence is that of UPF0102 protein FTF0898c from Francisella tularensis subsp. tularensis (strain FSC 198).